Consider the following 105-residue polypeptide: Ribosomal silencing factor RsfS (105 aa).

The protein belongs to the Iojap/RsfS family. Interacts with ribosomal protein uL14 (rplN).

Its subcellular location is the cytoplasm. Its function is as follows. Functions as a ribosomal silencing factor. Interacts with ribosomal protein uL14 (rplN), blocking formation of intersubunit bridge B8. Prevents association of the 30S and 50S ribosomal subunits and the formation of functional ribosomes, thus repressing translation. The protein is Ribosomal silencing factor RsfS of Escherichia coli O6:H1 (strain CFT073 / ATCC 700928 / UPEC).